Consider the following 99-residue polypeptide: Malonate decarboxylase acyl carrier protein (99 aa).

An O-(phosphoribosyl dephospho-coenzyme A)serine modification is found at S25.

It belongs to the MdcC family. Post-translationally, covalently binds the prosthetic group of malonate decarboxylase.

The protein localises to the cytoplasm. In terms of biological role, subunit of malonate decarboxylase, it is an acyl carrier protein to which acetyl and malonyl thioester residues are bound via a 2'-(5''-phosphoribosyl)-3'-dephospho-CoA prosthetic group and turn over during the catalytic mechanism. The chain is Malonate decarboxylase acyl carrier protein from Stutzerimonas stutzeri (strain A1501) (Pseudomonas stutzeri).